A 328-amino-acid polypeptide reads, in one-letter code: MSQKRSLVFAIRDFPPGCGTHIDVSSSLNHPAEKAFKHPRTGDVSGENLSFAEAKPEGTCLKRESADQDHIFAAPEHNAKREPAGQDHVVAATTVAYATSSHRQKVEIGNSDCDPTPREKVLEVLSLFKQVYNQLDRDKKARRGGDFLDATSRIDLKTLTVLEKMGKQVNTEKRIGSVPGINIGDVFQYKTELRVVGLHSKPMCGIDYIKLGDDRITTSIVASEGYGYNDTYNSGVMVYTGEGGNVINKQKKTEDQKLVKGNLALATSMRQKSQVRVIRGEERLDRKGKRYVYDGLYMVEEYWVERDVRGKSVYKFKLCRIPGQLPLT.

One can recognise a YDG domain in the interval 176 to 320 (GSVPGINIGD…KSVYKFKLCR (145 aa)).

The protein localises to the nucleus. The chain is YDG domain-containing protein At5g47150 from Arabidopsis thaliana (Mouse-ear cress).